A 273-amino-acid polypeptide reads, in one-letter code: Bis(5'-nucleosyl)-tetraphosphatase, symmetrical (273 aa).

The protein belongs to the Ap4A hydrolase family.

The catalysed reaction is P(1),P(4)-bis(5'-adenosyl) tetraphosphate + H2O = 2 ADP + 2 H(+). Its function is as follows. Hydrolyzes diadenosine 5',5'''-P1,P4-tetraphosphate to yield ADP. In Proteus mirabilis (strain HI4320), this protein is Bis(5'-nucleosyl)-tetraphosphatase, symmetrical.